We begin with the raw amino-acid sequence, 279 residues long: Probable endonuclease 4 (279 aa).

H69, H109, E145, D179, H182, H216, D229, H231, and E261 together coordinate Zn(2+).

Belongs to the AP endonuclease 2 family. It depends on Zn(2+) as a cofactor.

The enzyme catalyses Endonucleolytic cleavage to 5'-phosphooligonucleotide end-products.. Endonuclease IV plays a role in DNA repair. It cleaves phosphodiester bonds at apurinic or apyrimidinic (AP) sites, generating a 3'-hydroxyl group and a 5'-terminal sugar phosphate. This Desulforapulum autotrophicum (strain ATCC 43914 / DSM 3382 / VKM B-1955 / HRM2) (Desulfobacterium autotrophicum) protein is Probable endonuclease 4.